A 520-amino-acid chain; its full sequence is Glutamate decarboxylase-like protein FG08083 (520 aa).

Position 86–88 (86–88 (KLV)) interacts with substrate. The residue at position 300 (Lys300) is an N6-(pyridoxal phosphate)lysine. Positions 338–357 (KNGVSSEQSANTNGSEKESW) are disordered. A compositionally biased stretch (polar residues) spans 340–351 (GVSSEQSANTNG). Arg492 serves as a coordination point for substrate.

It belongs to the group II decarboxylase family. Requires pyridoxal 5'-phosphate as cofactor.

The protein operates within mycotoxin biosynthesis. Its function is as follows. Glutamate decarboxylase-like protein; part of the gene cluster that mediates the biosynthesis of butenolide, a mycotoxin that shows antibiotic activity but does not seem to play a major role in the spread of head blight in wheat. Butenolide is derived from glutamic acid via a 4-acetamido-2-butenoic acid intermediate. The predicted function of the NADH:flavin oxidoreductase FG08077, the cytochrome P450 monooxygenase FG08079, the decarboxylase FG08083, and the putative acetyltransferase FG08082 are consistent with this pathway, however, the respective activities of the butelonide biosynthesis cluster enzymes have still to be experimentally determined. This chain is Glutamate decarboxylase-like protein FG08083, found in Gibberella zeae (strain ATCC MYA-4620 / CBS 123657 / FGSC 9075 / NRRL 31084 / PH-1) (Wheat head blight fungus).